We begin with the raw amino-acid sequence, 176 residues long: Jacalin-related lectin 19 (176 aa).

The 143-residue stretch at T12–R154 folds into the Jacalin-type lectin domain.

Belongs to the jacalin lectin family.

This Arabidopsis thaliana (Mouse-ear cress) protein is Jacalin-related lectin 19 (JAL19).